Consider the following 345-residue polypeptide: Anthranilate phosphoribosyltransferase (345 aa).

5-phospho-alpha-D-ribose 1-diphosphate contacts are provided by residues G88, G91–D92, T96, N98–T101, K116–G124, and S128. G88 serves as a coordination point for anthranilate. Position 100 (S100) interacts with Mg(2+). N119 serves as a coordination point for anthranilate. R174 serves as a coordination point for anthranilate. Mg(2+) is bound by residues D233 and E234.

It belongs to the anthranilate phosphoribosyltransferase family. Homodimer. Mg(2+) serves as cofactor.

It catalyses the reaction N-(5-phospho-beta-D-ribosyl)anthranilate + diphosphate = 5-phospho-alpha-D-ribose 1-diphosphate + anthranilate. Its pathway is amino-acid biosynthesis; L-tryptophan biosynthesis; L-tryptophan from chorismate: step 2/5. Catalyzes the transfer of the phosphoribosyl group of 5-phosphorylribose-1-pyrophosphate (PRPP) to anthranilate to yield N-(5'-phosphoribosyl)-anthranilate (PRA). In Prochlorococcus marinus (strain NATL2A), this protein is Anthranilate phosphoribosyltransferase.